The sequence spans 248 residues: 3-deoxy-manno-octulosonate cytidylyltransferase (248 aa).

This sequence belongs to the KdsB family.

It is found in the cytoplasm. The enzyme catalyses 3-deoxy-alpha-D-manno-oct-2-ulosonate + CTP = CMP-3-deoxy-beta-D-manno-octulosonate + diphosphate. The protein operates within nucleotide-sugar biosynthesis; CMP-3-deoxy-D-manno-octulosonate biosynthesis; CMP-3-deoxy-D-manno-octulosonate from 3-deoxy-D-manno-octulosonate and CTP: step 1/1. It participates in bacterial outer membrane biogenesis; lipopolysaccharide biosynthesis. In terms of biological role, activates KDO (a required 8-carbon sugar) for incorporation into bacterial lipopolysaccharide in Gram-negative bacteria. In Leptospira interrogans serogroup Icterohaemorrhagiae serovar copenhageni (strain Fiocruz L1-130), this protein is 3-deoxy-manno-octulosonate cytidylyltransferase.